The following is a 71-amino-acid chain: Large ribosomal subunit protein uL29 (71 aa).

The protein belongs to the universal ribosomal protein uL29 family.

In Roseiflexus sp. (strain RS-1), this protein is Large ribosomal subunit protein uL29.